The chain runs to 121 residues: UPF0102 protein AAur_2443 (121 aa).

It belongs to the UPF0102 family.

The chain is UPF0102 protein AAur_2443 from Paenarthrobacter aurescens (strain TC1).